We begin with the raw amino-acid sequence, 598 residues long: NADH-ubiquinone oxidoreductase chain 5 (598 aa).

Transmembrane regions (helical) follow at residues 6–26 (LTLI…PPII), 32–52 (MILT…PLTI), 84–100 (YTVI…WSIM), 113–133 (MDKF…FISA), 136–156 (LLQL…LISW), 241–261 (TPVS…FLLI), 272–292 (LMLE…ALCA), 301–320 (IIAF…VGLN), 325–347 (AFLH…GSII), 370–390 (TTCM…AGFF), 409–429 (LMVT…LIIM), 456–476 (LAWG…PMKP), 478–498 (IFTM…ISLI), and 576–596 (LNSA…LSLT).

Belongs to the complex I subunit 5 family.

The protein resides in the mitochondrion inner membrane. It catalyses the reaction a ubiquinone + NADH + 5 H(+)(in) = a ubiquinol + NAD(+) + 4 H(+)(out). Functionally, core subunit of the mitochondrial membrane respiratory chain NADH dehydrogenase (Complex I) that is believed to belong to the minimal assembly required for catalysis. Complex I functions in the transfer of electrons from NADH to the respiratory chain. The immediate electron acceptor for the enzyme is believed to be ubiquinone. The polypeptide is NADH-ubiquinone oxidoreductase chain 5 (MT-ND5) (Petromyzon marinus (Sea lamprey)).